Reading from the N-terminus, the 82-residue chain is MDEKTIEKIKKEAEEIINKFSEVLEKFNLEMEESYYIIDTRNVLREDEAVESNPEFREKFLKIAPKVNKEGYVVVEKGSWLK.

The protein belongs to the GatC family. In terms of assembly, heterotrimer of A, B and C subunits.

It catalyses the reaction L-glutamyl-tRNA(Gln) + L-glutamine + ATP + H2O = L-glutaminyl-tRNA(Gln) + L-glutamate + ADP + phosphate + H(+). It carries out the reaction L-aspartyl-tRNA(Asn) + L-glutamine + ATP + H2O = L-asparaginyl-tRNA(Asn) + L-glutamate + ADP + phosphate + 2 H(+). Functionally, allows the formation of correctly charged Asn-tRNA(Asn) or Gln-tRNA(Gln) through the transamidation of misacylated Asp-tRNA(Asn) or Glu-tRNA(Gln) in organisms which lack either or both of asparaginyl-tRNA or glutaminyl-tRNA synthetases. The reaction takes place in the presence of glutamine and ATP through an activated phospho-Asp-tRNA(Asn) or phospho-Glu-tRNA(Gln). The chain is Probable glutamyl-tRNA(Gln) amidotransferase subunit C from Methanocaldococcus jannaschii (strain ATCC 43067 / DSM 2661 / JAL-1 / JCM 10045 / NBRC 100440) (Methanococcus jannaschii).